The following is a 284-amino-acid chain: 2-dehydro-3-deoxyphosphooctonate aldolase (284 aa).

It belongs to the KdsA family.

The protein localises to the cytoplasm. The catalysed reaction is D-arabinose 5-phosphate + phosphoenolpyruvate + H2O = 3-deoxy-alpha-D-manno-2-octulosonate-8-phosphate + phosphate. It functions in the pathway carbohydrate biosynthesis; 3-deoxy-D-manno-octulosonate biosynthesis; 3-deoxy-D-manno-octulosonate from D-ribulose 5-phosphate: step 2/3. Its pathway is bacterial outer membrane biogenesis; lipopolysaccharide biosynthesis. The sequence is that of 2-dehydro-3-deoxyphosphooctonate aldolase from Haemophilus influenzae (strain 86-028NP).